Consider the following 382-residue polypeptide: Mannitol-1-phosphate 5-dehydrogenase (382 aa).

3-14 (ALHFGAGNIGRG) contributes to the NAD(+) binding site. Lysine 269 is modified (N6-acetyllysine).

Belongs to the mannitol dehydrogenase family.

The catalysed reaction is D-mannitol 1-phosphate + NAD(+) = beta-D-fructose 6-phosphate + NADH + H(+). The sequence is that of Mannitol-1-phosphate 5-dehydrogenase from Escherichia coli O81 (strain ED1a).